A 572-amino-acid polypeptide reads, in one-letter code: MFS-type transporter pydD (572 aa).

Positions 1 to 15 (MLQEDKSSETMHDPS) are enriched in basic and acidic residues. The tract at residues 1 to 46 (MLQEDKSSETMHDPSTRGVETRNVTAVDSPLETATTSESPETERTN) is disordered. A glycan (N-linked (GlcNAc...) asparagine) is linked at Asn-23. Low complexity predominate over residues 29–39 (SPLETATTSES). The next 8 membrane-spanning stretches (helical) occupy residues 56–76 (FWAL…EGTI), 88–108 (LGGG…MTAM), 123–143 (WPML…GGAT), 156–176 (GIGA…VVPL), 185–205 (IVMG…GLIV), 212–232 (WTFY…FSFL), 255–275 (ALFV…GSVY), and 282–302 (VLVP…FEGS). Asn-317 is a glycosylation site (N-linked (GlcNAc...) asparagine). Transmembrane regions (helical) follow at residues 321–341 (VGVM…LYFM), 358–378 (VQIL…GFLM), 386–406 (PIHY…SLLD), 419–439 (IVYS…LLAP), 451–471 (TWSF…AAVF), and 529–549 (WLVS…AREV).

The protein belongs to the major facilitator superfamily.

It is found in the membrane. MFS-type transporter; part of the gene cluster that mediates the biosynthesis of pyrrocidines, fungal natural products containing a macrocyclic para-cyclophane connected to a decahydrofluorene ring system that show potent antibiotic activities toward Gram-negative bacteria. The polypeptide is MFS-type transporter pydD (Acremonium sp).